The primary structure comprises 407 residues: Na(+)-translocating NADH-quinone reductase subunit F (407 aa).

The chain crosses the membrane as a helical span at residues 3–23 (IILGVVMFTLIVLALVLVILF). Residues 32-126 (GDITISVNDD…DMDIELPEEI (95 aa)) form the 2Fe-2S ferredoxin-type domain. Residues C69, C75, C78, and C110 each contribute to the [2Fe-2S] cluster site. Residues 129 to 269 (VKKWECTVIS…SGPFGEFFAK (141 aa)) enclose the FAD-binding FR-type domain. The segment at 272-389 (DAEMVFVGGG…PMMNAAVIGM (118 aa)) is catalytic.

Belongs to the NqrF family. As to quaternary structure, composed of six subunits; NqrA, NqrB, NqrC, NqrD, NqrE and NqrF. [2Fe-2S] cluster serves as cofactor. It depends on FAD as a cofactor.

The protein localises to the cell inner membrane. The enzyme catalyses a ubiquinone + n Na(+)(in) + NADH + H(+) = a ubiquinol + n Na(+)(out) + NAD(+). Functionally, NQR complex catalyzes the reduction of ubiquinone-1 to ubiquinol by two successive reactions, coupled with the transport of Na(+) ions from the cytoplasm to the periplasm. The first step is catalyzed by NqrF, which accepts electrons from NADH and reduces ubiquinone-1 to ubisemiquinone by a one-electron transfer pathway. In Vibrio campbellii (strain ATCC BAA-1116), this protein is Na(+)-translocating NADH-quinone reductase subunit F.